The sequence spans 374 residues: Histidinol-phosphate aminotransferase 2 (374 aa).

An N6-(pyridoxal phosphate)lysine modification is found at lysine 227.

This sequence belongs to the class-II pyridoxal-phosphate-dependent aminotransferase family. Histidinol-phosphate aminotransferase subfamily. As to quaternary structure, homodimer. The cofactor is pyridoxal 5'-phosphate.

The enzyme catalyses L-histidinol phosphate + 2-oxoglutarate = 3-(imidazol-4-yl)-2-oxopropyl phosphate + L-glutamate. Its pathway is amino-acid biosynthesis; L-histidine biosynthesis; L-histidine from 5-phospho-alpha-D-ribose 1-diphosphate: step 7/9. In Ralstonia nicotianae (strain ATCC BAA-1114 / GMI1000) (Ralstonia solanacearum), this protein is Histidinol-phosphate aminotransferase 2 (hisC2).